We begin with the raw amino-acid sequence, 704 residues long: Ion-translocating oxidoreductase complex subunit C (704 aa).

2 4Fe-4S ferredoxin-type domains span residues 368-397 and 407-436; these read MGAP…QQLY and KATA…VQYF. C377, C380, C383, C387, C416, C419, C422, and C426 together coordinate [4Fe-4S] cluster. Residues 534 to 682 are disordered; that stretch reads QARAKQAAHP…AEPADPRKAA (149 aa).

This sequence belongs to the 4Fe4S bacterial-type ferredoxin family. RnfC subfamily. In terms of assembly, the complex is composed of six subunits: RsxA, RsxB, RsxC, RsxD, RsxE and RsxG. [4Fe-4S] cluster serves as cofactor.

It is found in the cell inner membrane. In terms of biological role, part of a membrane-bound complex that couples electron transfer with translocation of ions across the membrane. Required to maintain the reduced state of SoxR. This is Ion-translocating oxidoreductase complex subunit C from Salmonella enteritidis PT4 (strain P125109).